Consider the following 933-residue polypeptide: Serine/threonine-protein kinase PknD (933 aa).

Residues 4-291 form the Protein kinase domain; that stretch reads YDIIRMIGKG…ALKADIEQHL (288 aa). ATP-binding positions include 10–18 and lysine 33; that span reads IGKGGMGEV. The active-site Proton acceptor is the aspartate 138.

The protein belongs to the protein kinase superfamily. Ser/Thr protein kinase family. Autophosphorylated on serine and threonine residues.

The enzyme catalyses L-seryl-[protein] + ATP = O-phospho-L-seryl-[protein] + ADP + H(+). The catalysed reaction is L-threonyl-[protein] + ATP = O-phospho-L-threonyl-[protein] + ADP + H(+). Together with the serine/threonine kinase Pkn1, may play a role in the specific interactions with host proteins during intracellular growth. This Chlamydia abortus (strain DSM 27085 / S26/3) (Chlamydophila abortus) protein is Serine/threonine-protein kinase PknD.